Consider the following 274-residue polypeptide: MNKQSLFENIKRKKSFLCVGLDTDIKKIPDHLLDDSDPIFAFNKAIVDATADYCIAYKPNLAFYESMGVKGWIAFEKTVNYIKENYPDQFIIADAKRGDIGNTSAMYARTFFEELDIDSVTVAPYMGEDSVTPFLSYEGKWVILLALTSNKGSHDFQLTEDANGERLFEKVLKKSQEWANDEQMMYVVGATQGRAFEDIRKIVPNHFLLVPGIGAQGGSLEEVCKYGMNSTCGLIVNSSRGIIYVDKTENFAAAARAAAKEVQEQMAEQLKAIL.

Residue Lys96 is the Proton donor of the active site.

It belongs to the OMP decarboxylase family. Type 2 subfamily.

It carries out the reaction orotidine 5'-phosphate + H(+) = UMP + CO2. It participates in pyrimidine metabolism; UMP biosynthesis via de novo pathway; UMP from orotate: step 2/2. In Bacteroides fragilis (strain YCH46), this protein is Orotidine 5'-phosphate decarboxylase.